We begin with the raw amino-acid sequence, 201 residues long: Protein GrpE (201 aa).

It belongs to the GrpE family. Homodimer.

It localises to the cytoplasm. Participates actively in the response to hyperosmotic and heat shock by preventing the aggregation of stress-denatured proteins, in association with DnaK and GrpE. It is the nucleotide exchange factor for DnaK and may function as a thermosensor. Unfolded proteins bind initially to DnaJ; upon interaction with the DnaJ-bound protein, DnaK hydrolyzes its bound ATP, resulting in the formation of a stable complex. GrpE releases ADP from DnaK; ATP binding to DnaK triggers the release of the substrate protein, thus completing the reaction cycle. Several rounds of ATP-dependent interactions between DnaJ, DnaK and GrpE are required for fully efficient folding. This chain is Protein GrpE, found in Shewanella denitrificans (strain OS217 / ATCC BAA-1090 / DSM 15013).